Reading from the N-terminus, the 357-residue chain is Adenosine deaminase (357 aa).

Positions 16 and 18 each coordinate Zn(2+). 3 residues coordinate substrate: His-18, Asp-20, and Gly-185. His-212 lines the Zn(2+) pocket. The active-site Proton donor is the Glu-215. Residue Asp-294 coordinates Zn(2+). Substrate is bound at residue Asp-295.

Belongs to the metallo-dependent hydrolases superfamily. Adenosine and AMP deaminases family. It depends on Zn(2+) as a cofactor.

Its subcellular location is the cell membrane. The protein resides in the cell junction. The protein localises to the cytoplasmic vesicle lumen. It is found in the cytoplasm. It localises to the lysosome. It carries out the reaction adenosine + H2O + H(+) = inosine + NH4(+). The enzyme catalyses 2'-deoxyadenosine + H2O + H(+) = 2'-deoxyinosine + NH4(+). Its function is as follows. Catalyzes the hydrolytic deamination of adenosine and 2-deoxyadenosine. Plays an important role in purine metabolism and in adenosine homeostasis. Modulates signaling by extracellular adenosine, and so contributes indirectly to cellular signaling events. May act as a positive regulator of T-cell coactivation. This is Adenosine deaminase (ADA) from Gallus gallus (Chicken).